Consider the following 512-residue polypeptide: GTPase Obg (512 aa).

Residues 2–159 (ATFVDTVTLH…GDVVLELKVV (158 aa)) form the Obg domain. The region spanning 160-336 (ADVALVGYPS…LSFALAELVE (177 aa)) is the OBG-type G domain. GTP-binding positions include 166–173 (GYPSAGKS), 191–195 (FTTLH), 212–215 (DVPG), 288–291 (NKID), and 317–319 (STV). Residues S173 and T193 each coordinate Mg(2+). Residues 355–439 (PRAVNEKPFT…GDGIVFDWEP (85 aa)) form the OCT domain. The disordered stretch occupies residues 491–512 (GEAGLWADEDGTDEDASSDAKA). A compositionally biased stretch (acidic residues) spans 497–512 (ADEDGTDEDASSDAKA).

Belongs to the TRAFAC class OBG-HflX-like GTPase superfamily. OBG GTPase family. Monomer. Mg(2+) is required as a cofactor.

The protein resides in the cytoplasm. In terms of biological role, an essential GTPase which binds GTP, GDP and possibly (p)ppGpp with moderate affinity, with high nucleotide exchange rates and a fairly low GTP hydrolysis rate. Plays a role in control of the cell cycle, stress response, ribosome biogenesis and in those bacteria that undergo differentiation, in morphogenesis control. The chain is GTPase Obg from Clavibacter michiganensis subsp. michiganensis (strain NCPPB 382).